Here is a 379-residue protein sequence, read N- to C-terminus: Homoserine O-succinyltransferase (379 aa).

The region spanning 51–360 (NAVLICHALS…DAPQGHDAFL (310 aa)) is the AB hydrolase-1 domain. Serine 157 acts as the Nucleophile in catalysis. Arginine 227 lines the substrate pocket. Catalysis depends on residues aspartate 323 and histidine 356. Residue aspartate 357 participates in substrate binding.

Belongs to the AB hydrolase superfamily. MetX family. As to quaternary structure, homodimer.

The protein localises to the cytoplasm. The enzyme catalyses L-homoserine + succinyl-CoA = O-succinyl-L-homoserine + CoA. It functions in the pathway amino-acid biosynthesis; L-methionine biosynthesis via de novo pathway; O-succinyl-L-homoserine from L-homoserine: step 1/1. Its function is as follows. Transfers a succinyl group from succinyl-CoA to L-homoserine, forming succinyl-L-homoserine. This Pseudomonas fluorescens (strain Pf0-1) protein is Homoserine O-succinyltransferase.